A 740-amino-acid polypeptide reads, in one-letter code: Catalase-peroxidase (740 aa).

Positions 102-229 (WHAAGTYRTG…LAAIQMGLIY (128 aa)) form a cross-link, tryptophyl-tyrosyl-methioninium (Trp-Tyr) (with M-256). His-103 serves as the catalytic Proton acceptor. A disordered region spans residues 111 to 130 (GDGRGGSSSGQQRFAPLNSW). The segment at residues 229–256 (YVNPEGPGGDPHDPEGMARDMRETFARM) is a cross-link (tryptophyl-tyrosyl-methioninium (Tyr-Met) (with W-102)). His-271 serves as a coordination point for heme b.

It belongs to the peroxidase family. Peroxidase/catalase subfamily. In terms of assembly, homodimer or homotetramer. It depends on heme b as a cofactor. Formation of the three residue Trp-Tyr-Met cross-link is important for the catalase, but not the peroxidase activity of the enzyme.

It carries out the reaction H2O2 + AH2 = A + 2 H2O. The catalysed reaction is 2 H2O2 = O2 + 2 H2O. Bifunctional enzyme with both catalase and broad-spectrum peroxidase activity. The protein is Catalase-peroxidase of Erythrobacter litoralis (strain HTCC2594).